A 207-amino-acid chain; its full sequence is MVATCLQVVGFVTSFVGWIGVIVTTSTNDWVVTCGYTIPTCRKLDELGSKGLWADCVMATGLYHCKPLVDILILPGYVQACRALMIAASVLGLPAILLLLTVLPCIRMGQEPGVAKYRRAQLAGVLLILLALCALVATIWFPVCAHRETTIVSFGYSLYAGWIGAVLCLVGGCVILCCAGDAQAFGENRFYYTAGSSSPTHAKSAHV.

Met1 is a topological domain (cytoplasmic). The chain crosses the membrane as a helical span at residues 2–22; it reads VATCLQVVGFVTSFVGWIGVI. Over 23-82 the chain is Extracellular; the sequence is VTTSTNDWVVTCGYTIPTCRKLDELGSKGLWADCVMATGLYHCKPLVDILILPGYVQACR. The chain crosses the membrane as a helical span at residues 83-103; the sequence is ALMIAASVLGLPAILLLLTVL. At 104-122 the chain is on the cytoplasmic side; sequence PCIRMGQEPGVAKYRRAQL. Residues 123 to 143 traverse the membrane as a helical segment; the sequence is AGVLLILLALCALVATIWFPV. Topologically, residues 144–157 are extracellular; the sequence is CAHRETTIVSFGYS. Residues 158 to 178 form a helical membrane-spanning segment; the sequence is LYAGWIGAVLCLVGGCVILCC. At 179–207 the chain is on the cytoplasmic side; it reads AGDAQAFGENRFYYTAGSSSPTHAKSAHV. Phosphoserine is present on residues Ser197 and Ser198.

It belongs to the claudin family. Interacts with tetraspanin-3/TSPAN3. Interacts with OCLN.

Its subcellular location is the cell junction. The protein localises to the tight junction. It localises to the cell membrane. Functionally, plays a major role in tight junction-specific obliteration of the intercellular space, through calcium-independent cell-adhesion activity. The polypeptide is Claudin-11 (CLDN11) (Homo sapiens (Human)).